Here is a 273-residue protein sequence, read N- to C-terminus: 2,3,4,5-tetrahydropyridine-2,6-dicarboxylate N-succinyltransferase (273 aa).

2 residues coordinate substrate: Arg104 and Asp141.

The protein belongs to the transferase hexapeptide repeat family. As to quaternary structure, homotrimer.

It is found in the cytoplasm. The catalysed reaction is (S)-2,3,4,5-tetrahydrodipicolinate + succinyl-CoA + H2O = (S)-2-succinylamino-6-oxoheptanedioate + CoA. The protein operates within amino-acid biosynthesis; L-lysine biosynthesis via DAP pathway; LL-2,6-diaminopimelate from (S)-tetrahydrodipicolinate (succinylase route): step 1/3. The chain is 2,3,4,5-tetrahydropyridine-2,6-dicarboxylate N-succinyltransferase from Nitrosococcus oceani (strain ATCC 19707 / BCRC 17464 / JCM 30415 / NCIMB 11848 / C-107).